A 423-amino-acid chain; its full sequence is Putative competence-damage inducible protein (423 aa).

Belongs to the CinA family.

The protein is Putative competence-damage inducible protein of Streptococcus pyogenes serotype M1.